The chain runs to 61 residues: Opistoporin-4 (61 aa).

The propeptide occupies 45 to 61 (EAGQMPFDEFMDILHYY).

This sequence belongs to the non-disulfide-bridged peptide (NDBP) superfamily. Long chain multifunctional peptide (group 2) family. As to expression, expressed by the venom gland.

It localises to the secreted. The protein localises to the target cell membrane. Functionally, at high concentrations, acts as a pore former in cellular membranes and causes the leakage of the cells. At submicromolar concentrations, degranulates granulocytes and has a weak hemolytic activity against human erythrocytes. Also strongly inhibits the production of superoxide anions. Has a strong antibacterial activity against Gram-negative bacteria but is less active against Gram-positive bacteria. Also has antifungal activity. This is Opistoporin-4 from Opistophthalmus carinatus (African yellow leg scorpion).